Here is a 238-residue protein sequence, read N- to C-terminus: uncharacterized protein (238 aa).

4 helical membrane passes run 16–36 (HLII…IGLE), 44–64 (VGVK…IVSI), 81–101 (PMRL…GVIL), and 123–143 (IGIA…VMIL).

This sequence belongs to the MgtC/SapB family.

The protein resides in the cell inner membrane. This is an uncharacterized protein from Haemophilus influenzae (strain ATCC 51907 / DSM 11121 / KW20 / Rd).